The following is a 517-amino-acid chain: Glutamate--tRNA ligase (517 aa).

Positions 14-24 (PSPTGPLHIGG) match the 'HIGH' region motif. The short motif at 266–270 (KLSKR) is the 'KMSKS' region element. ATP is bound at residue lysine 269.

The protein belongs to the class-I aminoacyl-tRNA synthetase family. Glutamate--tRNA ligase type 1 subfamily. Monomer.

Its subcellular location is the cytoplasm. It catalyses the reaction tRNA(Glu) + L-glutamate + ATP = L-glutamyl-tRNA(Glu) + AMP + diphosphate. Its function is as follows. Catalyzes the attachment of glutamate to tRNA(Glu) in a two-step reaction: glutamate is first activated by ATP to form Glu-AMP and then transferred to the acceptor end of tRNA(Glu). In Cytophaga hutchinsonii (strain ATCC 33406 / DSM 1761 / CIP 103989 / NBRC 15051 / NCIMB 9469 / D465), this protein is Glutamate--tRNA ligase.